The following is a 305-amino-acid chain: PI-PLC X domain-containing protein 2 (305 aa).

The region spanning 42–215 (HLHNLPLSNL…NCQVLIFYHC (174 aa)) is the PI-PLC X-box domain. Residues His-57 and His-132 contribute to the active site.

As to expression, widely expressed.

Its subcellular location is the nucleus. It catalyses the reaction a 1,2-diacyl-sn-glycero-3-phospho-(1D-myo-inositol) + H2O = 1D-myo-inositol 1-phosphate + a 1,2-diacyl-sn-glycerol + H(+). Functionally, catalyzes the hydrolysis of inositol from phosphatidylinositol (1,2-diacyl-sn-glycero-3-phospho-(1D-myo-inositol), PI). Could also hydrolyze various multi-phosphorylated derivatives of PI, such as phosphatidylinositol-4,5 bisphosphate (PIP2), releasing inositol-1,4,5-trisphosphate (IP3) and the protein kinase C activator diacylglycerol (DAG), therefore mediating cell signaling. This Homo sapiens (Human) protein is PI-PLC X domain-containing protein 2 (PLCXD2).